Reading from the N-terminus, the 449-residue chain is Tubulin alpha-2 chain (449 aa).

GTP is bound at residue Gln-11. Lys-40 carries the N6-acetyllysine modification. Residues Ser-140, Gly-144, Thr-145, Thr-179, Asn-206, and Asn-228 each contribute to the GTP site. Residue Glu-254 is part of the active site.

The protein belongs to the tubulin family. As to quaternary structure, dimer of alpha and beta chains. A typical microtubule is a hollow water-filled tube with an outer diameter of 25 nm and an inner diameter of 15 nM. Alpha-beta heterodimers associate head-to-tail to form protofilaments running lengthwise along the microtubule wall with the beta-tubulin subunit facing the microtubule plus end conferring a structural polarity. Microtubules usually have 13 protofilaments but different protofilament numbers can be found in some organisms and specialized cells. Acetylation of alpha chains at Lys-40 stabilizes microtubules and affects affinity and processivity of microtubule motors. This modification has a role in multiple cellular functions, ranging from cell motility, cell cycle progression or cell differentiation to intracellular trafficking and signaling.

The protein localises to the cytoplasm. It localises to the cytoskeleton. It carries out the reaction GTP + H2O = GDP + phosphate + H(+). In terms of biological role, tubulin is the major constituent of microtubules, a cylinder consisting of laterally associated linear protofilaments composed of alpha- and beta-tubulin heterodimers. Microtubules grow by the addition of GTP-tubulin dimers to the microtubule end, where a stabilizing cap forms. Below the cap, tubulin dimers are in GDP-bound state, owing to GTPase activity of alpha-tubulin. This Stylonychia lemnae (Ciliate) protein is Tubulin alpha-2 chain.